Consider the following 274-residue polypeptide: 16S rRNA (guanine(1405)-N(7))-methyltransferase (274 aa).

Residues 102–108, Ala-133, Asp-156, 182–183, Leu-198, and Gln-207 each bind S-adenosyl-L-methionine; these read HISTRER and DL.

Belongs to the methyltransferase superfamily. Aminoglycoside resistance family.

It catalyses the reaction guanosine(1405) in 16S rRNA + S-adenosyl-L-methionine = N(7)-methylguanosine(1405) in 16S rRNA + S-adenosyl-L-homocysteine. In terms of biological role, specifically methylates the N(7) position of guanine 1405 in 16S rRNA. Confers resistance to various aminoglycosides, including gentamicin, kanamycin and sisomicin. The polypeptide is 16S rRNA (guanine(1405)-N(7))-methyltransferase (sgm) (Micromonospora zionensis).